Consider the following 462-residue polypeptide: Argininosuccinate lyase (462 aa).

This sequence belongs to the lyase 1 family. Argininosuccinate lyase subfamily.

It is found in the cytoplasm. It carries out the reaction 2-(N(omega)-L-arginino)succinate = fumarate + L-arginine. It participates in amino-acid biosynthesis; L-arginine biosynthesis; L-arginine from L-ornithine and carbamoyl phosphate: step 3/3. The chain is Argininosuccinate lyase from Xanthobacter autotrophicus (strain ATCC BAA-1158 / Py2).